The sequence spans 73 residues: MAFLKKSLFLVLFLAIVPLSICEEEKREEENEEKQEDDDQSEKRGLVSGLLNTAGGLLGDLLGSLGSLSGGES.

A signal peptide spans 1 to 22 (MAFLKKSLFLVLFLAIVPLSIC). Positions 23–42 (EEEKREEENEEKQEDDDQSE) are excised as a propeptide. The tract at residues 25–45 (EKREEENEEKQEDDDQSEKRG) is disordered. A compositionally biased stretch (acidic residues) spans 30–40 (ENEEKQEDDDQ). A Glycine amide modification is found at Gly-70. Positions 72–73 (ES) are excised as a propeptide.

The protein belongs to the frog skin active peptide (FSAP) family. Plasticin subfamily. As to expression, expressed by the skin glands.

Its subcellular location is the secreted. It is found in the target cell membrane. Functionally, peptide with no antimicrobial activity. May act in synergy with cationic peptides by enhancing their activity. Has a moderate hemolytic activity. The polypeptide is Plasticin-A1 (Agalychnis annae (Blue-sided leaf frog)).